Reading from the N-terminus, the 251-residue chain is Probable transcriptional regulatory protein NFA_37020 (251 aa).

This sequence belongs to the TACO1 family.

It is found in the cytoplasm. This Nocardia farcinica (strain IFM 10152) protein is Probable transcriptional regulatory protein NFA_37020.